A 310-amino-acid chain; its full sequence is Beta-lactamase AST-1 (310 aa).

The N-terminal stretch at 1–31 is a signal peptide; sequence MTFSALPFRRADRRRLLAAALAACALTLTAA. Cys-32 is lipidated: N-palmitoyl cysteine. The S-diacylglycerol cysteine moiety is linked to residue Cys-32. Ser-91 serves as the catalytic Acyl-ester intermediate. Residue Ser-151 coordinates substrate. The Proton acceptor role is filled by Glu-187. 255–257 is a substrate binding site; the sequence is KTG.

The protein belongs to the class-A beta-lactamase family.

It is found in the cell membrane. It carries out the reaction a beta-lactam + H2O = a substituted beta-amino acid. Inhibited by clavulanic acid. Confers high levels of resistance to amoxicillin, benzylpenicillin, piperacillin, ticarcillin and cephalothin. Not active against ceftazidime, cefotaxime and aztreonam. In Nocardia asteroides, this protein is Beta-lactamase AST-1 (bla).